A 333-amino-acid polypeptide reads, in one-letter code: 1,5-anhydro-D-fructose reductase (333 aa).

Residues 9-12 (ASTI), 33-34 (ST), Arg-38, 71-76 (TTNELH), 93-94 (EK), Asn-120, 162-163 (WR), and Tyr-283 contribute to the NADP(+) site.

Monomer.

The catalysed reaction is 1,5-anhydro-D-mannitol + NADP(+) = 1,5-anhydro-D-fructose + NADPH + H(+). Its function is as follows. Catalyzes the NADPH-specific reduction of 1,5-anhydro-D-fructose to 1,5-anhydro-D-mannitol. Also shows some activity against structurally related compounds such as 3-keto-1,5-anhydro-D-fructose, D-glucosone and D-xylosone. The enzyme cannot use NADH as cosubstrate. This is 1,5-anhydro-D-fructose reductase (afr) from Ensifer adhaerens (Sinorhizobium morelense).